A 268-amino-acid polypeptide reads, in one-letter code: MVSWIISRMVVLAFGTLYPAYSSYKAVKTKNVKEYVKWMMYWIVFALFTTAETITDMLLSWFPFYFELKIAFVIWLLSPYTKGSSVLYRKFVHPTLSNKEREIDEYITQAKDRSYDTMMRFGRRGLNIAATAAVTAATKGQGVLSEKLRSFSMQDLTLIQNEDELQLEGGDDTHTAATLPRAKTATRTVRATPVPADTESQHSSRSDDQSDSRTEHSDEDAADKAPKRIAITRAAKKPAAAKTEQTTKTVKKAPKKKPTTANNVAESP.

Transmembrane regions (helical) follow at residues 1 to 21 and 35 to 55; these read MVSWIISRMVVLAFGTLYPAY and YVKWMMYWIVFALFTTAETIT. The tract at residues 170-268 is disordered; that stretch reads GDDTHTAATL…TTANNVAESP (99 aa). Low complexity predominate over residues 180-196; the sequence is PRAKTATRTVRATPVPA. The span at 199-216 shows a compositional bias: basic and acidic residues; sequence ESQHSSRSDDQSDSRTEH. Residues 228 to 248 are compositionally biased toward low complexity; the sequence is RIAITRAAKKPAAAKTEQTTK. Positions 249-258 are enriched in basic residues; it reads TVKKAPKKKP.

Belongs to the DP1 family. As to quaternary structure, interacts with odorant receptor proteins.

Its subcellular location is the membrane. In terms of biological role, may enhance the cell surface expression of odorant receptors. This Danio rerio (Zebrafish) protein is Receptor expression-enhancing protein 2 (reep2).